Consider the following 255-residue polypeptide: 3-dehydroquinate dehydratase (255 aa).

Residues 47 to 49 (EWR) and Arg-83 each bind 3-dehydroquinate. The Proton donor/acceptor role is filled by His-144. The active-site Schiff-base intermediate with substrate is the Lys-171. 3 residues coordinate 3-dehydroquinate: Arg-214, Ser-233, and Gln-237.

The protein belongs to the type-I 3-dehydroquinase family. As to quaternary structure, homodimer.

The enzyme catalyses 3-dehydroquinate = 3-dehydroshikimate + H2O. It functions in the pathway metabolic intermediate biosynthesis; chorismate biosynthesis; chorismate from D-erythrose 4-phosphate and phosphoenolpyruvate: step 3/7. In terms of biological role, involved in the third step of the chorismate pathway, which leads to the biosynthesis of aromatic amino acids. Catalyzes the cis-dehydration of 3-dehydroquinate (DHQ) and introduces the first double bond of the aromatic ring to yield 3-dehydroshikimate. This is 3-dehydroquinate dehydratase from Alkaliphilus oremlandii (strain OhILAs) (Clostridium oremlandii (strain OhILAs)).